Reading from the N-terminus, the 591-residue chain is CTP synthase 1-A (591 aa).

Positions Ser-300 to Tyr-554 constitute a Glutamine amidotransferase type-1 domain. Residues Cys-399, His-526, and Glu-528 each act as for GATase activity in the active site.

The protein belongs to the CTP synthase family.

It catalyses the reaction UTP + L-glutamine + ATP + H2O = CTP + L-glutamate + ADP + phosphate + 2 H(+). It participates in pyrimidine metabolism; CTP biosynthesis via de novo pathway; CTP from UDP: step 2/2. In terms of biological role, this enzyme is involved in the de novo synthesis of CTP, a precursor of DNA, RNA and phospholipids. Catalyzes the ATP-dependent amination of UTP to CTP with either L-glutamine or ammonia as a source of nitrogen. In Xenopus laevis (African clawed frog), this protein is CTP synthase 1-A (ctps1-a).